A 214-amino-acid polypeptide reads, in one-letter code: Ribosomal RNA small subunit methyltransferase G (214 aa).

Residues G78, L83, 129–130, and R144 each bind S-adenosyl-L-methionine; that span reads AE.

This sequence belongs to the methyltransferase superfamily. RNA methyltransferase RsmG family.

The protein resides in the cytoplasm. It catalyses the reaction guanosine(527) in 16S rRNA + S-adenosyl-L-methionine = N(7)-methylguanosine(527) in 16S rRNA + S-adenosyl-L-homocysteine. Specifically methylates the N7 position of guanine in position 527 of 16S rRNA. The polypeptide is Ribosomal RNA small subunit methyltransferase G (Marinobacter nauticus (strain ATCC 700491 / DSM 11845 / VT8) (Marinobacter aquaeolei)).